Consider the following 652-residue polypeptide: RNA-binding KH domain-containing protein RCF3 (652 aa).

Positions 1–14 (MERSRSKRNYHYDQ) are enriched in basic and acidic residues. The interval 1-63 (MERSRSKRNY…NGRPSKSHPE (63 aa)) is disordered. A compositionally biased stretch (gly residues) spans 34-55 (FGGGGGGNNRYRGGGGGGGGNG). KH domains lie at 67 to 139 (TTTY…QEAL) and 175 to 245 (RVVT…LAIV). A disordered region spans residues 253–307 (QHRDRSNFQGRSHSPERSFAAAGDDYMPQLRRQSSDRFPRGNFRNNNFSSRQSNY). Residues 292-306 (RGNFRNNNFSSRQSN) are compositionally biased toward low complexity. KH domains lie at 324–391 (ELVF…QEAL), 408–476 (LITT…LVEL), and 576–640 (RSTL…QSLL).

In terms of assembly, homodimer. Interacts with CPL1. Interacts with RS40 and RS41. Interacts with DRB1/HYL1 and SE. Interacts with CPL2. As to expression, expressed in roots, cotyledons, leaves, flowers and siliques.

Its subcellular location is the nucleus. The protein resides in the nucleus speckle. Acts as a negative regulator of osmotic stress-induced gene expression. Involved in the regulation of thermotolerance responses under heat stress. Functions as an upstream regulator of heat stress transcription factor (HSF) genes. Negatively regulates HSFA1A, HSFA1B and HSFA1D, but positively controls the expression of HSFA1E, HSFA3, HSFA9, HSFB3, and DREB2C. Forms a complex with CPL1 that modulates co-transcriptional processes such as mRNA capping and polyadenylation, and functions to repress stress-inducible gene expression. Regulates pre-mRNA processing under salt stress. Involved in primary miRNA processing and pri-miRNA biogenesis. Binds both intronless and intron-containing pri-miRNAs. Acts as a regulator of biotic stress response gene expression and basal JA-mediated responses involved in defense. Acts as a negative regulator of resistance to the fungal pathogen Fusarium oxysporum. The polypeptide is RNA-binding KH domain-containing protein RCF3 (Arabidopsis thaliana (Mouse-ear cress)).